The following is a 959-amino-acid chain: DEAD-box ATP-dependent RNA helicase rde-12 (959 aa).

Positions 1–336 (MSSFGNNAGG…EGVNAPVRAP (336 aa)) are disordered. A compositionally biased stretch (basic and acidic residues) spans 71-97 (GRREDDRSHSRDNHGGSRYGERDDRGN). A compositionally biased stretch (polar residues) spans 98–118 (NGRSADNRYSQSNYNYDSNRG). Residues 122–134 (YQRDNHGSKDDRG) show a composition bias toward basic and acidic residues. Positions 137-160 (NQYNDHGSNHNSNSRNDQYRQGSY) are enriched in polar residues. Composition is skewed to basic and acidic residues over residues 166–181 (SGYRRDDDRRRNDNDQ) and 189–201 (RDSDRNSPRDHHN). Residues 202 to 213 (YNSQSSPRSHQG) show a composition bias toward polar residues. Composition is skewed to basic and acidic residues over residues 219–239 (SAPKEDNQRRYDNHQGGHDSY) and 255–270 (YRNDYRSQQDSRDHRS). The segment covering 271–280 (GGNNSSSGFK) has biased composition (low complexity). A compositionally biased stretch (gly residues) spans 281-301 (NDGGFGGNDNRGFGNNGGGSF). The span at 302-317 (GNPNNSYRGNSNNIGG) shows a compositional bias: low complexity. Positions 380 to 408 (TSWTNSGLHPTILETLKRIKYNNVRTIQG) match the Q motif motif. Residues 411–599 (IPQVLDGHDV…NELMKRLPGQ (189 aa)) enclose the Helicase ATP-binding domain. 424-431 (AETSAGKT) is an ATP binding site. Positions 539–542 (DEAD) match the DEAD box motif. The Helicase C-terminal domain maps to 632 to 792 (KLREILKQNV…KVPDFLDAMA (161 aa)). 2 disordered regions span residues 793–834 (KSSR…GGGR) and 858–959 (GGGG…DDEW). Composition is skewed to gly residues over residues 800 to 834 (GTSGFGQRGGYGGRGGGFGGTGRGRGGGVFGGGGR) and 858 to 872 (GGGGFGGVKPSGFGG). A compositionally biased stretch (polar residues) spans 930–941 (TLGSSTFGTANN). Residues 942–959 (ADEEPTETGADGNDDDEW) are compositionally biased toward acidic residues.

It belongs to the DEAD box helicase family. DDX3/DED1 subfamily. In terms of assembly, interacts with wago-1, ergo-1 and rde-1. Mg(2+) is required as a cofactor. As to expression, expressed in the soma and germline.

It localises to the cytoplasm. The protein localises to the perinuclear region. It is found in the cytoplasmic granule. Its subcellular location is the P-body. The enzyme catalyses ATP + H2O = ADP + phosphate + H(+). Probable ATP-dependent RNA helicase involved in RNAi-mediated gene silencing. Specifically required in the endogenous siRNA pathway for biogenesis of secondary endogenous small interfering RNA (siRNA) intermediates called 22G-RNAs. May associate with and recruit rde-10 to primary siRNA-targeted mRNA for secondary siRNA synthesis. May be recruited to target mRNAs by rde-1 and/or ergo-1. In Caenorhabditis elegans, this protein is DEAD-box ATP-dependent RNA helicase rde-12.